The following is a 699-amino-acid chain: 4-alpha-glucanotransferase (699 aa).

Belongs to the disproportionating enzyme family.

The protein localises to the cytoplasm. It catalyses the reaction Transfers a segment of a (1-&gt;4)-alpha-D-glucan to a new position in an acceptor, which may be glucose or a (1-&gt;4)-alpha-D-glucan.. The sequence is that of 4-alpha-glucanotransferase (malQ) from Haemophilus influenzae (strain ATCC 51907 / DSM 11121 / KW20 / Rd).